A 158-amino-acid polypeptide reads, in one-letter code: Transcriptional repressor NrdR (158 aa).

The disordered stretch occupies residues 1–22 (MRCPYCGSEDTQVKDSRPAEDN). Residues 3–34 (CPYCGSEDTQVKDSRPAEDNTSIRRRRICPDC) fold into a zinc finger. Positions 11-22 (TQVKDSRPAEDN) are enriched in basic and acidic residues. The 91-residue stretch at 49-139 (LMVIKKTGRK…VYRDFSHAED (91 aa)) folds into the ATP-cone domain.

This sequence belongs to the NrdR family. Requires Zn(2+) as cofactor.

In terms of biological role, negatively regulates transcription of bacterial ribonucleotide reductase nrd genes and operons by binding to NrdR-boxes. This is Transcriptional repressor NrdR from Rhizobium rhizogenes (strain K84 / ATCC BAA-868) (Agrobacterium radiobacter).